Consider the following 294-residue polypeptide: Formamidopyrimidine-DNA glycosylase (294 aa).

P2 functions as the Schiff-base intermediate with DNA in the catalytic mechanism. E3 functions as the Proton donor in the catalytic mechanism. K58 (proton donor; for beta-elimination activity) is an active-site residue. DNA is bound by residues H105, R124, and K167. The FPG-type zinc-finger motif lies at 258-294 (QVYDREGEPCRTRGCKGTVKRFTQNGRSTFWCPSCQK). R284 functions as the Proton donor; for delta-elimination activity in the catalytic mechanism.

It belongs to the FPG family. Monomer. It depends on Zn(2+) as a cofactor.

It catalyses the reaction Hydrolysis of DNA containing ring-opened 7-methylguanine residues, releasing 2,6-diamino-4-hydroxy-5-(N-methyl)formamidopyrimidine.. It carries out the reaction 2'-deoxyribonucleotide-(2'-deoxyribose 5'-phosphate)-2'-deoxyribonucleotide-DNA = a 3'-end 2'-deoxyribonucleotide-(2,3-dehydro-2,3-deoxyribose 5'-phosphate)-DNA + a 5'-end 5'-phospho-2'-deoxyribonucleoside-DNA + H(+). Its function is as follows. Involved in base excision repair of DNA damaged by oxidation or by mutagenic agents. Acts as a DNA glycosylase that recognizes and removes damaged bases. Has a preference for oxidized purines, such as 7,8-dihydro-8-oxoguanine (8-oxoG). Has AP (apurinic/apyrimidinic) lyase activity and introduces nicks in the DNA strand. Cleaves the DNA backbone by beta-delta elimination to generate a single-strand break at the site of the removed base with both 3'- and 5'-phosphates. The sequence is that of Formamidopyrimidine-DNA glycosylase from Afipia carboxidovorans (strain ATCC 49405 / DSM 1227 / KCTC 32145 / OM5) (Oligotropha carboxidovorans).